The primary structure comprises 571 residues: Proline--tRNA ligase (571 aa).

It belongs to the class-II aminoacyl-tRNA synthetase family. ProS type 1 subfamily. In terms of assembly, homodimer.

It is found in the cytoplasm. It carries out the reaction tRNA(Pro) + L-proline + ATP = L-prolyl-tRNA(Pro) + AMP + diphosphate. Its function is as follows. Catalyzes the attachment of proline to tRNA(Pro) in a two-step reaction: proline is first activated by ATP to form Pro-AMP and then transferred to the acceptor end of tRNA(Pro). As ProRS can inadvertently accommodate and process non-cognate amino acids such as alanine and cysteine, to avoid such errors it has two additional distinct editing activities against alanine. One activity is designated as 'pretransfer' editing and involves the tRNA(Pro)-independent hydrolysis of activated Ala-AMP. The other activity is designated 'posttransfer' editing and involves deacylation of mischarged Ala-tRNA(Pro). The misacylated Cys-tRNA(Pro) is not edited by ProRS. This Pseudoalteromonas atlantica (strain T6c / ATCC BAA-1087) protein is Proline--tRNA ligase.